The chain runs to 190 residues: Elongation factor P-like protein (190 aa).

Belongs to the elongation factor P family.

The chain is Elongation factor P-like protein from Pectobacterium atrosepticum (strain SCRI 1043 / ATCC BAA-672) (Erwinia carotovora subsp. atroseptica).